A 925-amino-acid chain; its full sequence is Serine/threonine-protein kinase SIK2 (925 aa).

The region spanning 20 to 271 (YDIEGTLGKG…IAQIKEHKWM (252 aa)) is the Protein kinase domain. Thr-25 carries the post-translational modification Phosphothreonine. Residues 26 to 34 (LGKGNFAVV) and Lys-49 each bind ATP. At Lys-53 the chain carries N6-acetyllysine; by EP300. Asp-142 serves as the catalytic Proton acceptor. Residue Thr-175 is modified to Phosphothreonine. Residues 295 to 335 (EFNEQVLRLMHSLGIDQQKTIESLQNKSYNHFAAIYFLLVE) enclose the UBA domain. Ser-534 carries the phosphoserine modification. A disordered region spans residues 564-586 (ALSSQKREVHNRSPVSFREGRRA). Residue Ser-587 is modified to Phosphoserine. Disordered stretches follow at residues 630-674 (PNLA…PRQS), 742-776 (SSYP…PLSP), and 800-895 (QPLP…SSYD). 2 stretches are compositionally biased toward low complexity: residues 648 to 659 (QEEVSQQQESVS) and 742 to 756 (SSYP…LPRQ). The segment covering 765-774 (APPFSLTQPL) has biased composition (polar residues). The span at 808 to 820 (PRAAPLPTQLQQQ) shows a compositional bias: low complexity. The span at 821–833 (QPPPPPPPPPPRQ) shows a compositional bias: pro residues.

Belongs to the protein kinase superfamily. CAMK Ser/Thr protein kinase family. SNF1 subfamily. Interacts with and phosphorylates TORC2/CRTC2. Mg(2+) is required as a cofactor. Phosphorylated at Thr-175 by STK11/LKB1 in complex with STE20-related adapter-alpha (STRADA) pseudo kinase and CAB39. Phosphorylated at Thr-484 in response to insulin in adipocytes. In terms of processing, acetylation at Lys-53 inhibits kinase activity. Deacetylated by HDAC6.

Its subcellular location is the cytoplasm. The protein resides in the endoplasmic reticulum membrane. It carries out the reaction L-seryl-[protein] + ATP = O-phospho-L-seryl-[protein] + ADP + H(+). The catalysed reaction is L-threonyl-[protein] + ATP = O-phospho-L-threonyl-[protein] + ADP + H(+). Activated by phosphorylation on Thr-175. Its function is as follows. Serine/threonine-protein kinase that plays a role in many biological processes such as fatty acid oxidation, autophagy, immune response or glucose metabolism. Phosphorylates 'Ser-794' of IRS1 in insulin-stimulated adipocytes, potentially modulating the efficiency of insulin signal transduction. Inhibits CREB activity by phosphorylating and repressing TORCs, the CREB-specific coactivators. Phosphorylates EP300 and thus inhibits its histone acetyltransferase activity. In turn, regulates the DNA-binding ability of several transcription factors such as PPARA or MLXIPL. Also plays a role in thymic T-cell development. The sequence is that of Serine/threonine-protein kinase SIK2 (SIK2) from Pongo abelii (Sumatran orangutan).